Consider the following 205-residue polypeptide: MKIANTFIKRGAAGGLDLSQAPGVTLTLAERRRSRQRLDLDEGRGELGMAIERGQTLRDGDVLVAEDGTYVVVRAALEDVARVTAATPWQLARAAYHLGNRHVLLEIAERHLQFEYDAVLIDMLAQLGGVTATRLRAVFEPDVGAYGGGHRHGHDESFGDDYALAQAAYHAHEAHPHAHSHAGGHGHVHSGHGHGGKHGEHDAES.

The interval 171–205 is disordered; that stretch reads AHEAHPHAHSHAGGHGHVHSGHGHGGKHGEHDAES. The span at 177–196 shows a compositional bias: basic residues; it reads HAHSHAGGHGHVHSGHGHGG.

It belongs to the UreE family.

Its subcellular location is the cytoplasm. Involved in urease metallocenter assembly. Binds nickel. Probably functions as a nickel donor during metallocenter assembly. This Bordetella bronchiseptica (strain ATCC BAA-588 / NCTC 13252 / RB50) (Alcaligenes bronchisepticus) protein is Urease accessory protein UreE.